We begin with the raw amino-acid sequence, 481 residues long: Glutamate--tRNA ligase 1 (481 aa).

A 'HIGH' region motif is present at residues 11–21 (PSPTGSLHIGG). The 'KMSKS' region signature appears at 244–248 (KLSKR). Position 247 (lysine 247) interacts with ATP.

This sequence belongs to the class-I aminoacyl-tRNA synthetase family. Glutamate--tRNA ligase type 1 subfamily. As to quaternary structure, monomer.

The protein resides in the cytoplasm. It catalyses the reaction tRNA(Glu) + L-glutamate + ATP = L-glutamyl-tRNA(Glu) + AMP + diphosphate. Catalyzes the attachment of glutamate to tRNA(Glu) in a two-step reaction: glutamate is first activated by ATP to form Glu-AMP and then transferred to the acceptor end of tRNA(Glu). This chain is Glutamate--tRNA ligase 1, found in Caldanaerobacter subterraneus subsp. tengcongensis (strain DSM 15242 / JCM 11007 / NBRC 100824 / MB4) (Thermoanaerobacter tengcongensis).